Here is a 688-residue protein sequence, read N- to C-terminus: Glycine--tRNA ligase beta subunit (688 aa).

This sequence belongs to the class-II aminoacyl-tRNA synthetase family. Tetramer of two alpha and two beta subunits.

The protein localises to the cytoplasm. The enzyme catalyses tRNA(Gly) + glycine + ATP = glycyl-tRNA(Gly) + AMP + diphosphate. The protein is Glycine--tRNA ligase beta subunit of Syntrophomonas wolfei subsp. wolfei (strain DSM 2245B / Goettingen).